Reading from the N-terminus, the 88-residue chain is Sec-independent protein translocase protein TatA (88 aa).

A helical transmembrane segment spans residues 3–23 (IFGVGLPEVTVILILALLIFG). Residues 56–88 (MNEQDKDESPISIESNQTNEINQEKIDSENSKK) form a disordered region. Residues 67-76 (SIESNQTNEI) are compositionally biased toward polar residues. A compositionally biased stretch (basic and acidic residues) spans 77-88 (NQEKIDSENSKK).

The protein belongs to the TatA/E family. As to quaternary structure, forms a complex with TatC.

It is found in the cell inner membrane. Functionally, part of the twin-arginine translocation (Tat) system that transports large folded proteins containing a characteristic twin-arginine motif in their signal peptide across membranes. TatA could form the protein-conducting channel of the Tat system. This chain is Sec-independent protein translocase protein TatA, found in Prochlorococcus marinus (strain AS9601).